Consider the following 649-residue polypeptide: Pesticidal crystal protein Cry3Ca (649 aa).

Over residues 1-13 (MNPNNRSEHDTIK) the composition is skewed to basic and acidic residues. The interval 1–29 (MNPNNRSEHDTIKATENNEVSNNHAQYPL) is disordered. The segment covering 14–25 (ATENNEVSNNHA) has biased composition (polar residues).

It belongs to the delta endotoxin family.

In terms of biological role, promotes colloidosmotic lysis by binding to the midgut epithelial cells of Coleoptera. The sequence is that of Pesticidal crystal protein Cry3Ca (cry3Ca) from Bacillus thuringiensis subsp. kurstaki.